A 36-amino-acid chain; its full sequence is APPEPVYPGDDATPEQMAEYVADLRRYINMLTRPRY.

The residue at position 36 (Y36) is a Tyrosine amide.

Belongs to the NPY family.

It is found in the secreted. Its function is as follows. Hormone secreted by pancreatic cells that acts as a regulator of pancreatic and gastrointestinal functions probably by signaling through the G protein-coupled receptor NPY4R2. This Oryctolagus cuniculus (Rabbit) protein is Pancreatic polypeptide (PPY).